Consider the following 574-residue polypeptide: Putative DNA-directed RNA polymerase subunit alpha-like 1 (574 aa).

The alpha N-terminal domain (alpha-NTD) stretch occupies residues 1–352 (MTNNKNFADW…ELFSLFLQTS (352 aa)). Positions 419 to 574 (PDYDRYNSIT…RERKRGNREF (156 aa)) are alpha C-terminal domain (alpha-CTD). The disordered stretch occupies residues 534–574 (QETLRKEQDEQSSQQQKDQMEKRRWERQNRERERKRGNREF). Basic and acidic residues predominate over residues 551–574 (DQMEKRRWERQNRERERKRGNREF).

The protein belongs to the RNA polymerase alpha chain family. In terms of assembly, in plastids the minimal PEP RNA polymerase catalytic core is composed of four subunits: alpha, beta, beta', and beta''. When a (nuclear-encoded) sigma factor is associated with the core the holoenzyme is formed, which can initiate transcription.

The protein resides in the plastid. The protein localises to the chloroplast. It catalyses the reaction RNA(n) + a ribonucleoside 5'-triphosphate = RNA(n+1) + diphosphate. DNA-dependent RNA polymerase catalyzes the transcription of DNA into RNA using the four ribonucleoside triphosphates as substrates. This Pelargonium hortorum (Common geranium) protein is Putative DNA-directed RNA polymerase subunit alpha-like 1 (rpoAL1-A).